Here is a 774-residue protein sequence, read N- to C-terminus: Shugoshin (774 aa).

Residues Ser41 to Leu105 adopt a coiled-coil conformation. Disordered regions lie at residues Gly106–Arg151, Ser205–Leu661, and Cys676–Leu774. The span at Pro109 to Tyr120 shows a compositional bias: basic and acidic residues. Over residues Ala214 to Glu224 the composition is skewed to acidic residues. A compositionally biased stretch (polar residues) spans Gly297–Glu318. Positions Lys382 to Val398 are enriched in basic and acidic residues. Positions Glu399–Phe409 are enriched in polar residues. 2 stretches are compositionally biased toward basic and acidic residues: residues Asn482–Phe495 and Phe549–Gln558. 2 stretches are compositionally biased toward polar residues: residues Pro595–Asn604 and Gln640–Thr651. Over residues Ala706–Pro722 the composition is skewed to low complexity. Acidic residues predominate over residues Leu743 to Gly754. The span at Arg765–Leu774 shows a compositional bias: basic residues.

The protein belongs to the shugoshin family.

Its subcellular location is the nucleus. The protein localises to the chromosome. The protein resides in the centromere. Functionally, plays a central role in chromosome cohesion during cell division by preventing premature dissociation of cohesin complex from centromeres after prophase, when most of cohesin complex dissociates from chromosomes arms. This chain is Shugoshin (sgo-1), found in Neurospora crassa (strain ATCC 24698 / 74-OR23-1A / CBS 708.71 / DSM 1257 / FGSC 987).